A 241-amino-acid polypeptide reads, in one-letter code: 1-(5-phosphoribosyl)-5-[(5-phosphoribosylamino)methylideneamino] imidazole-4-carboxamide isomerase (241 aa).

The active-site Proton acceptor is the Asp-10. Asp-129 acts as the Proton donor in catalysis.

Belongs to the HisA/HisF family.

The protein resides in the cytoplasm. It carries out the reaction 1-(5-phospho-beta-D-ribosyl)-5-[(5-phospho-beta-D-ribosylamino)methylideneamino]imidazole-4-carboxamide = 5-[(5-phospho-1-deoxy-D-ribulos-1-ylimino)methylamino]-1-(5-phospho-beta-D-ribosyl)imidazole-4-carboxamide. The protein operates within amino-acid biosynthesis; L-histidine biosynthesis; L-histidine from 5-phospho-alpha-D-ribose 1-diphosphate: step 4/9. The protein is 1-(5-phosphoribosyl)-5-[(5-phosphoribosylamino)methylideneamino] imidazole-4-carboxamide isomerase of Salinispora tropica (strain ATCC BAA-916 / DSM 44818 / JCM 13857 / NBRC 105044 / CNB-440).